The chain runs to 343 residues: Heat-inducible transcription repressor HrcA (343 aa).

Belongs to the HrcA family.

In terms of biological role, negative regulator of class I heat shock genes (grpE-dnaK-dnaJ and groELS operons). Prevents heat-shock induction of these operons. The sequence is that of Heat-inducible transcription repressor HrcA from Mycolicibacterium paratuberculosis (strain ATCC BAA-968 / K-10) (Mycobacterium paratuberculosis).